Consider the following 404-residue polypeptide: Sorting nexin-5 (404 aa).

An N-acetylalanine modification is found at Ala-2. Residues 25–172 (LNVDPSLQID…HVFLEYDQDL (148 aa)) form the PX domain. Residues 40–46 (SERDKVK), 99–105 (FDGPREK), and 113–116 (EGSM) contribute to the a 1,2-diacyl-sn-glycero-3-phospho-(1D-myo-inositol-4,5-bisphosphate) site. The tract at residues 169-261 (DQDLSVRRKN…HSLALEEPTV (93 aa)) is interaction with DOCK1. Residues 183 to 200 (FGGFFKSVVKSADEVLFS) form a membrane-binding amphipathic helix region. Position 193 is a phosphoserine (Ser-193). In terms of domain architecture, BAR spans 202–404 (VKEVDDFFEQ…QSCIDLFKNN (203 aa)). N6-acetyllysine is present on Lys-275.

Belongs to the sorting nexin family. As to quaternary structure, forms heterodimers with BAR domain-containing sorting nexins SNX1 and SNX2; does not homodimerize. The heterodimers are proposed to self-assemble into helical arrays on the membrane to stabilize and expand local membrane curvature underlying endosomal tubule formation. Thought to be a component of the originally described retromer complex (also called SNX-BAR retromer) which is a pentamer containing the heterotrimeric retromer cargo-selective complex (CSC), also described as vacuolar protein sorting subcomplex (VPS), and a heterodimeric membrane-deforming subcomplex formed between SNX1 or SNX2 and SNX5 or SNX6 (also called SNX-BAR subcomplex); the respective CSC and SNX-BAR subcomplexes associate with low affinity. Interacts with SNX1, SNX2, VPS26A, VPS29, VPS35, DCTN1, DOCK1, MIB1, PIP5K1C. Interacts with HGS; increased by PIP5K1C kinase activity and by PtdIns(3P) and/or PtdIns(3,4)P2.

It is found in the endosome. Its subcellular location is the early endosome. The protein localises to the early endosome membrane. The protein resides in the cell membrane. It localises to the cytoplasmic vesicle membrane. It is found in the cytoplasm. Its subcellular location is the cell projection. The protein localises to the phagocytic cup. The protein resides in the ruffle. Its function is as follows. Involved in several stages of intracellular trafficking. Interacts with membranes containing phosphatidylinositol lipids. Acts in part as component of the retromer membrane-deforming SNX-BAR subcomplex. The SNX-BAR retromer mediates retrograde transport of cargo proteins from endosomes to the trans-Golgi network (TGN) and is involved in endosome-to-plasma membrane transport for cargo protein recycling. The SNX-BAR subcomplex functions to deform the donor membrane into a tubular profile called endosome-to-TGN transport carrier (ETC). Does not have in vitro vesicle-to-membrane remodeling activity. Involved in retrograde transport of lysosomal enzyme receptor IGF2R. May function as link between endosomal transport vesicles and dynactin. Plays a role in the internalization of EGFR after EGF stimulation. Involved in EGFR endosomal sorting and degradation; the function involves PIP5K1C and is retromer-independent. Together with PIP5K1C facilitates HGS interaction with ubiquitinated EGFR, which initiates EGFR sorting to intraluminal vesicles (ILVs) of the multivesicular body for subsequent lysosomal degradation. Involved in E-cadherin sorting and degradation; inhibits PIP5K1C-mediated E-cadherin degradation. Plays a role in macropinocytosis. This Rattus norvegicus (Rat) protein is Sorting nexin-5 (Snx5).